Reading from the N-terminus, the 402-residue chain is Argininosuccinate synthase (402 aa).

9-17 is an ATP binding site; the sequence is AYSGGLDTS. Position 86 (Tyr-86) interacts with L-citrulline. Gly-116 contacts ATP. Thr-118, Asn-122, and Asp-123 together coordinate L-aspartate. Residue Asn-122 coordinates L-citrulline. L-citrulline-binding residues include Arg-126, Ser-174, Ser-183, Glu-259, and Tyr-271.

Belongs to the argininosuccinate synthase family. Type 1 subfamily. As to quaternary structure, homotetramer.

The protein resides in the cytoplasm. The catalysed reaction is L-citrulline + L-aspartate + ATP = 2-(N(omega)-L-arginino)succinate + AMP + diphosphate + H(+). It participates in amino-acid biosynthesis; L-arginine biosynthesis; L-arginine from L-ornithine and carbamoyl phosphate: step 2/3. This chain is Argininosuccinate synthase, found in Anoxybacillus flavithermus (strain DSM 21510 / WK1).